The sequence spans 869 residues: Kinesin-like protein KIN-10A (869 aa).

A compositionally biased stretch (polar residues) spans 1-36 (MAPTPSSSRSNQTQYTLIRTPQTKQRLNFHSKTPNP). The tract at residues 1–50 (MAPTPSSSRSNQTQYTLIRTPQTKQRLNFHSKTPNPDGSKDPSPPEHPVE) is disordered. A compositionally biased stretch (basic and acidic residues) spans 38 to 50 (GSKDPSPPEHPVE). The 320-residue stretch at 48-367 (PVEVIGRIRD…LEYGAKAKCI (320 aa)) folds into the Kinesin motor domain. An ATP-binding site is contributed by 129–136 (GPTGAGKS). Residues 393-515 (RIAAMDEFII…EIEVEFRRSN (123 aa)) are a coiled coil.

It belongs to the TRAFAC class myosin-kinesin ATPase superfamily. Kinesin family. KIN-10 subfamily. In terms of assembly, binds microtubules.

Its subcellular location is the cytoplasm. The protein localises to the cytoskeleton. The protein resides in the phragmoplast. Its function is as follows. Probable plus end-directed motor protein that may contribute to the transport of Golgi-derived vesicles in the phragmoplast. This Arabidopsis thaliana (Mouse-ear cress) protein is Kinesin-like protein KIN-10A.